We begin with the raw amino-acid sequence, 38 residues long: Large ribosomal subunit protein bL36 (38 aa).

The protein belongs to the bacterial ribosomal protein bL36 family.

The chain is Large ribosomal subunit protein bL36 (rpmJ) from Streptococcus pneumoniae serotype 4 (strain ATCC BAA-334 / TIGR4).